Here is a 279-residue protein sequence, read N- to C-terminus: 5'-nucleotidase SurE 1 (279 aa).

A divalent metal cation is bound by residues Asp12, Asp13, Ser45, and Asn103.

Belongs to the SurE nucleotidase family. The cofactor is a divalent metal cation.

The protein localises to the cytoplasm. It catalyses the reaction a ribonucleoside 5'-phosphate + H2O = a ribonucleoside + phosphate. Its function is as follows. Nucleotidase that shows phosphatase activity on nucleoside 5'-monophosphates. The chain is 5'-nucleotidase SurE 1 from Chlamydia caviae (strain ATCC VR-813 / DSM 19441 / 03DC25 / GPIC) (Chlamydophila caviae).